The chain runs to 66 residues: Large ribosomal subunit protein bL35 (66 aa).

Basic residues predominate over residues 1–16; that stretch reads MPKQKTHRASAKRFKR. Residues 1-20 form a disordered region; the sequence is MPKQKTHRASAKRFKRTGNG.

It belongs to the bacterial ribosomal protein bL35 family.

The protein is Large ribosomal subunit protein bL35 of Lactococcus lactis subsp. lactis (strain IL1403) (Streptococcus lactis).